We begin with the raw amino-acid sequence, 91 residues long: Large ribosomal subunit protein uL23 (91 aa).

It belongs to the universal ribosomal protein uL23 family. In terms of assembly, part of the 50S ribosomal subunit. Contacts protein L29, and trigger factor when it is bound to the ribosome.

Functionally, one of the early assembly proteins it binds 23S rRNA. One of the proteins that surrounds the polypeptide exit tunnel on the outside of the ribosome. Forms the main docking site for trigger factor binding to the ribosome. The sequence is that of Large ribosomal subunit protein uL23 from Staphylococcus saprophyticus subsp. saprophyticus (strain ATCC 15305 / DSM 20229 / NCIMB 8711 / NCTC 7292 / S-41).